We begin with the raw amino-acid sequence, 259 residues long: Ras-related protein Rab-34 (259 aa).

Position 1 is an N-acetylmethionine (methionine 1). The GTP site is built by serine 62, valine 63, glycine 64, lysine 65, threonine 66, aspartate 78, tyrosine 81, and threonine 84. Threonine 66 contacts Mg(2+). Positions 71–89 (RFCKDTFDKNYKATIGVDF) match the Switch 1 motif. Mg(2+) contacts are provided by threonine 84 and aspartate 107. The Switch 2 signature appears at 108–127 (TAGQERFKCIASTYYRGAQA). Residues glycine 110, lysine 167, aspartate 169, and serine 198 each contribute to the GTP site. Position 241 is a phosphoserine (serine 241). S-geranylgeranyl cysteine attachment occurs at residues cysteine 257 and cysteine 258.

This sequence belongs to the small GTPase superfamily. Rab family. As to quaternary structure, interacts with RILP. The GTP-bound form interacts with REP15. Mg(2+) serves as cofactor.

The protein localises to the cytoplasm. It localises to the golgi apparatus. Its subcellular location is the cytoplasmic vesicle. The protein resides in the phagosome. It is found in the phagosome membrane. The protein localises to the cell projection. It localises to the cilium. Its subcellular location is the cytoskeleton. The protein resides in the microtubule organizing center. It is found in the centrosome. The protein localises to the centriole. The enzyme catalyses GTP + H2O = GDP + phosphate + H(+). With respect to regulation, regulated by guanine nucleotide exchange factors (GEFs) which promote the exchange of bound GDP for free GTP. Regulated by GTPase activating proteins (GAPs) which increase the GTP hydrolysis activity. Inhibited by GDP dissociation inhibitors (GDIs). Its function is as follows. The small GTPases Rab are key regulators of intracellular membrane trafficking, from the formation of transport vesicles to their fusion with membranes. Rabs cycle between an inactive GDP-bound form and an active GTP-bound form that is able to recruit to membranes different sets of downstream effectors directly responsible for vesicle formation, movement, tethering and fusion. RAB34 transports protein involved in the redistribution of lysosomes to the peri-Golgi region. Plays a role in the maturation of phagosomes that engulf pathogens, such as S.aureus and M.tuberculosis. Plays a role in the fusion of phagosomes with lysosomes. Involved in ciliogenesis. In particular, it is required for early steps of the intracellular cilium assembly pathway initiated by trafficking and docking of ciliary vesicles to the centrioles in the cytoplasm, followed by axoneme formation in the cytoplasm. After axoneme elongation, the centrioles migrate close to the cell surface so that ciliary vesicles can fuse with the plasma membrane to expose cilia to the extracellular space. It seems dispensable for ciliogenesis via the extracellular pathway where cilium assembly begins after migration and docking of the centriole to the plasma membrane. Also acts as a positive regulator of hedgehog signaling and regulates ciliary function. This Rattus norvegicus (Rat) protein is Ras-related protein Rab-34.